Reading from the N-terminus, the 209-residue chain is Imidazole glycerol phosphate synthase subunit HisH (209 aa).

In terms of domain architecture, Glutamine amidotransferase type-1 spans 3–209; sequence KIAIIDYGMG…SILKNFGEMK (207 aa). The active-site Nucleophile is the Cys-81. Residues His-190 and Glu-192 contribute to the active site.

Heterodimer of HisH and HisF.

It localises to the cytoplasm. The catalysed reaction is 5-[(5-phospho-1-deoxy-D-ribulos-1-ylimino)methylamino]-1-(5-phospho-beta-D-ribosyl)imidazole-4-carboxamide + L-glutamine = D-erythro-1-(imidazol-4-yl)glycerol 3-phosphate + 5-amino-1-(5-phospho-beta-D-ribosyl)imidazole-4-carboxamide + L-glutamate + H(+). It carries out the reaction L-glutamine + H2O = L-glutamate + NH4(+). Its pathway is amino-acid biosynthesis; L-histidine biosynthesis; L-histidine from 5-phospho-alpha-D-ribose 1-diphosphate: step 5/9. IGPS catalyzes the conversion of PRFAR and glutamine to IGP, AICAR and glutamate. The HisH subunit catalyzes the hydrolysis of glutamine to glutamate and ammonia as part of the synthesis of IGP and AICAR. The resulting ammonia molecule is channeled to the active site of HisF. This chain is Imidazole glycerol phosphate synthase subunit HisH, found in Geobacter sulfurreducens (strain ATCC 51573 / DSM 12127 / PCA).